The following is a 681-amino-acid chain: PWWP domain-containing DNA repair factor 3B (681 aa).

Positions 102–121 (NLSQESMSEEQPTATASENV) are enriched in polar residues. Disordered regions lie at residues 102–144 (NLSQ…TQED), 166–200 (HTTG…DDKK), and 285–304 (QNQS…AGCS). Serine 128 bears the Phosphoserine mark. The span at 285–302 (QNQSSVESDVGAETSTAG) shows a compositional bias: polar residues. The PWWP domain maps to 377–438 (TGMIVWFKYQ…KKYDCKEKQA (62 aa)).

This sequence belongs to the PWWP3A family.

The protein is PWWP domain-containing DNA repair factor 3B (Pwwp3b) of Mus musculus (Mouse).